A 1117-amino-acid chain; its full sequence is Zinc finger E-box-binding homeobox 1 (1117 aa).

2 disordered regions span residues 1–103 (MADG…QNHD) and 122–143 (APEE…NGTP). Residues 15–30 (PRRNNVTNYNTVVEAN) show a composition bias toward low complexity. Phosphoserine is present on residues Ser-31 and Ser-33. A C2H2-type 1 zinc finger spans residues 150–173 (LTCPYCDRGYKRFTSLKEHIKYRH). Glycyl lysine isopeptide (Lys-Gly) (interchain with G-Cter in SUMO2) cross-links involve residues Lys-166 and Lys-175. 2 consecutive C2H2-type zinc fingers follow at residues 180 to 202 (FSCS…MTSH) and 220 to 242 (FKCT…LRIH). A C2H2-type 4; atypical zinc finger spans residues 248–272 (YECPNCKKRFSHSGSYSSHISSKKC). Residues 278 to 307 (VNGRPRSGLKTSQCSSPSLSTSPGSPTRPQ) form a disordered region. Lys-287 participates in a covalent cross-link: Glycyl lysine isopeptide (Lys-Gly) (interchain with G-Cter in SUMO2). The segment covering 288-304 (TSQCSSPSLSTSPGSPT) has biased composition (low complexity). Residues Ser-293 and Ser-302 each carry the phosphoserine modification. Residues Lys-311 and Lys-315 each participate in a glycyl lysine isopeptide (Lys-Gly) (interchain with G-Cter in SUMO2) cross-link. A Glycyl lysine isopeptide (Lys-Gly) (interchain with G-Cter in SUMO); alternate cross-link involves residue Lys-327. Lys-327 participates in a covalent cross-link: Glycyl lysine isopeptide (Lys-Gly) (interchain with G-Cter in SUMO2); alternate. Residues Lys-419, Lys-473, Lys-484, Lys-495, and Lys-528 each participate in a glycyl lysine isopeptide (Lys-Gly) (interchain with G-Cter in SUMO2) cross-link. 3 disordered regions span residues 476-501 (IPAP…TDKS), 528-566 (KHYD…SQPP), and 613-687 (GQIP…SPLN). Basic and acidic residues predominate over residues 484–501 (KSEKLPEDLTVKSETDKS). Residues 559 to 618 (DLSPSQPPLKNLLSLLKAYYALNAQPSTEELSKIADSVNLPLDGVKKWFEKMQAGQIPGQ) constitute a DNA-binding region (homeobox; atypical). Phosphoserine is present on residues Ser-657, Ser-664, Ser-671, and Ser-678. Residues 673–687 (MNGSRSCTSSPSPLN) are compositionally biased toward polar residues. A Phosphothreonine modification is found at Thr-680. The residue at position 682 (Ser-682) is a Phosphoserine. Lys-752 is covalently cross-linked (Glycyl lysine isopeptide (Lys-Gly) (interchain with G-Cter in SUMO); alternate). A Glycyl lysine isopeptide (Lys-Gly) (interchain with G-Cter in SUMO2); alternate cross-link involves residue Lys-752. The interval 834–876 (PPVKVIQPNGNQDERQDTSSEGVSTVEDQNDSDSTPPKKKTRK) is disordered. Polar residues predominate over residues 852 to 868 (SSEGVSTVEDQNDSDST). 2 C2H2-type zinc fingers span residues 882–904 (YACD…KYEH) and 910–932 (HECG…MRLH). The segment at 938 to 959 (YQCDKCGKRFSHSGSYSQHMNH) adopts a C2H2-type 7; atypical zinc-finger fold. The tract at residues 991–1117 (EHVGARASPS…QLSEEKTNEA (127 aa)) is disordered. 3 stretches are compositionally biased toward acidic residues: residues 1013–1032 (EEDE…MEEL), 1042–1069 (QGEE…DEAE), and 1098–1109 (SEMESESESEQL).

Belongs to the delta-EF1/ZFH-1 C2H2-type zinc-finger family. In terms of assembly, interacts (via N-terminus) with SMARCA4/BRG1. Ubiquitinated, leading to degradation in a proteasome-dependent manner. Deubiquitinated by USP51, leading to stabilization. Expressed in the external germinal layer (EGL) and internal granular layer (IGL) of the cerebellum (at protein level).

Its subcellular location is the nucleus. Functionally, acts as a transcriptional repressor. Binds to E-box sequences in the immunoglobulin heavy chain enhancer as well as in the regulatory regions of many other tissue-specific genes. Represses E-cadherin promoter and induces an epithelial-mesenchymal transition (EMT) by recruiting SMARCA4/BRG1. Represses BCL6 transcription in the presence of the corepressor CTBP1. Positively regulates neuronal differentiation. Represses RCOR1 transcription activation during neurogenesis. Represses transcription by binding to the E box (5'-CANNTG-3'). In the absence of TGFB1, acts as a repressor of COL1A2 transcription via binding to the E-box in the upstream enhancer region. Promotes tumorigenicity by repressing stemness-inhibiting microRNAs. The protein is Zinc finger E-box-binding homeobox 1 of Mus musculus (Mouse).